A 474-amino-acid polypeptide reads, in one-letter code: 3-isopropylmalate dehydratase large subunit (474 aa).

Positions 355, 415, and 418 each coordinate [4Fe-4S] cluster.

This sequence belongs to the aconitase/IPM isomerase family. LeuC type 1 subfamily. As to quaternary structure, heterodimer of LeuC and LeuD. The cofactor is [4Fe-4S] cluster.

The catalysed reaction is (2R,3S)-3-isopropylmalate = (2S)-2-isopropylmalate. It functions in the pathway amino-acid biosynthesis; L-leucine biosynthesis; L-leucine from 3-methyl-2-oxobutanoate: step 2/4. Catalyzes the isomerization between 2-isopropylmalate and 3-isopropylmalate, via the formation of 2-isopropylmaleate. The polypeptide is 3-isopropylmalate dehydratase large subunit (Shewanella sp. (strain W3-18-1)).